Here is a 260-residue protein sequence, read N- to C-terminus: Pyridoxine 5'-phosphate synthase (260 aa).

Asparagine 15 is a binding site for 3-amino-2-oxopropyl phosphate. 17 to 18 (DH) is a binding site for 1-deoxy-D-xylulose 5-phosphate. Residue arginine 26 coordinates 3-amino-2-oxopropyl phosphate. Histidine 51 (proton acceptor) is an active-site residue. 2 residues coordinate 1-deoxy-D-xylulose 5-phosphate: arginine 53 and histidine 58. The active-site Proton acceptor is glutamate 78. Threonine 108 provides a ligand contact to 1-deoxy-D-xylulose 5-phosphate. The Proton donor role is filled by histidine 199. 3-amino-2-oxopropyl phosphate is bound by residues glycine 200 and 221 to 222 (GH).

It belongs to the PNP synthase family. In terms of assembly, homooctamer; tetramer of dimers.

It is found in the cytoplasm. The catalysed reaction is 3-amino-2-oxopropyl phosphate + 1-deoxy-D-xylulose 5-phosphate = pyridoxine 5'-phosphate + phosphate + 2 H2O + H(+). It functions in the pathway cofactor biosynthesis; pyridoxine 5'-phosphate biosynthesis; pyridoxine 5'-phosphate from D-erythrose 4-phosphate: step 5/5. Catalyzes the complicated ring closure reaction between the two acyclic compounds 1-deoxy-D-xylulose-5-phosphate (DXP) and 3-amino-2-oxopropyl phosphate (1-amino-acetone-3-phosphate or AAP) to form pyridoxine 5'-phosphate (PNP) and inorganic phosphate. This Cupriavidus pinatubonensis (strain JMP 134 / LMG 1197) (Cupriavidus necator (strain JMP 134)) protein is Pyridoxine 5'-phosphate synthase.